A 304-amino-acid chain; its full sequence is Probable HTH-type transcriptional regulator LgoR (304 aa).

Residues 1–70 (MSRSQNLRHN…VGNDYVIARK (70 aa)) form the HTH gntR-type domain. Positions 31-50 (QSALAEMYNISRTTVRHILS) form a DNA-binding region, H-T-H motif.

Its function is as follows. May be a positive transcriptional regulator for lgoD and/or lgoT. Is essential for growth on L-galactonate as the sole carbon source. In Escherichia coli (strain K12), this protein is Probable HTH-type transcriptional regulator LgoR (lgoR).